Here is a 362-residue protein sequence, read N- to C-terminus: Putative lipoprotein YdaJ (362 aa).

The signal sequence occupies residues 1–20; that stretch reads MRHVLIAVILFFLSIGLSAG. A lipid anchor (N-palmitoyl cysteine) is attached at Cys-21. The S-diacylglycerol cysteine moiety is linked to residue Cys-21.

The protein localises to the cell membrane. In Bacillus subtilis (strain 168), this protein is Putative lipoprotein YdaJ (ydaJ).